The primary structure comprises 349 residues: CCN family member 2 (349 aa).

A signal peptide spans 1–26 (MTAASMGPVRVAFVVLLALCSRPAVG). One can recognise an IGFBP N-terminal domain in the interval 27-98 (QNCSGPCRCP…NRKIGVCTAK (72 aa)). Asn28 carries N-linked (GlcNAc...) asparagine glycosylation. 6 disulfide bridges follow: Cys29/Cys54, Cys33/Cys56, Cys35/Cys57, Cys43/Cys60, Cys68/Cys82, and Cys74/Cys95. Residues 101–167 (APCIFGGTVY…GKCCEEWVCD (67 aa)) enclose the VWFC domain. The TSP type-1 domain occupies 198-243 (NCLVQTTEWSACSKTCGMGISTRVTNDNASCRLEKQSRLCMVRPCE). A glycan (N-linked (GlcNAc...) asparagine) is linked at Asn225. The heparin-binding stretch occupies residues 247-349 (EENIKKGKKC…YYRKMYGDMA (103 aa)). Intrachain disulfides connect Cys256-Cys293, Cys273-Cys307, Cys284-Cys323, Cys287-Cys325, and Cys292-Cys329. Residues 256–330 (CIRTPKISKP…KTCACHYNCP (75 aa)) enclose the CTCK domain.

Belongs to the CCN family. As to quaternary structure, monomer. Interacts with TSKU. In terms of tissue distribution, expressed in bone marrow and thymic cells. Also expressed one of two Wilms tumors tested.

It localises to the secreted. Its subcellular location is the extracellular space. The protein localises to the extracellular matrix. Its function is as follows. Major connective tissue mitoattractant secreted by vascular endothelial cells. Promotes proliferation and differentiation of chondrocytes. Is involved in the stimulation of osteoblast differentiation and has a critical role in osteogenesis. Mediates heparin- and divalent cation-dependent cell adhesion in many cell types including fibroblasts, myofibroblasts, endothelial and epithelial cells. Enhances fibroblast growth factor-induced DNA synthesis. This is CCN family member 2 from Homo sapiens (Human).